The sequence spans 257 residues: Dihydroorotate dehydrogenase B (NAD(+)), electron transfer subunit (257 aa).

One can recognise an FAD-binding FR-type domain in the interval 2–102 (IGRERMTVAS…LGPLGNGFPL (101 aa)). Residues 53-56 (RPLS), 70-72 (IYR), and 77-78 (GT) each bind FAD. Positions 221, 226, 229, and 244 each coordinate [2Fe-2S] cluster.

The protein belongs to the PyrK family. As to quaternary structure, heterotetramer of 2 PyrK and 2 PyrD type B subunits. [2Fe-2S] cluster serves as cofactor. FAD is required as a cofactor.

It functions in the pathway pyrimidine metabolism; UMP biosynthesis via de novo pathway; orotate from (S)-dihydroorotate (NAD(+) route): step 1/1. In terms of biological role, responsible for channeling the electrons from the oxidation of dihydroorotate from the FMN redox center in the PyrD type B subunit to the ultimate electron acceptor NAD(+). This is Dihydroorotate dehydrogenase B (NAD(+)), electron transfer subunit from Geobacillus kaustophilus (strain HTA426).